The following is a 215-amino-acid chain: 3-isopropylmalate dehydratase small subunit (215 aa).

This sequence belongs to the LeuD family. LeuD type 1 subfamily. As to quaternary structure, heterodimer of LeuC and LeuD.

It catalyses the reaction (2R,3S)-3-isopropylmalate = (2S)-2-isopropylmalate. It functions in the pathway amino-acid biosynthesis; L-leucine biosynthesis; L-leucine from 3-methyl-2-oxobutanoate: step 2/4. Catalyzes the isomerization between 2-isopropylmalate and 3-isopropylmalate, via the formation of 2-isopropylmaleate. This chain is 3-isopropylmalate dehydratase small subunit (leuD), found in Azotobacter vinelandii.